A 488-amino-acid chain; its full sequence is DNA polymerase processivity factor (488 aa).

Disordered regions lie at residues 1–26 (MTDSPGGVAPASPVEDASDASLGQPE), 331–453 (SPSA…RSGS), and 469–488 (PGAFSAFRGGPQTPYGFGFP). Residues 331–344 (SPSAGSSASRASGS) are compositionally biased toward low complexity. The span at 345–355 (EPTDSQDSASD) shows a compositional bias: polar residues. Low complexity predominate over residues 368–379 (AARAGEAGALHA). A compositionally biased stretch (polar residues) spans 383-393 (PSSTTRVTPTT). The Bipartite nuclear localization signal motif lies at 394-413 (KRGRSGGEDARADTALKKPK). The span at 398 to 409 (SGGEDARADTAL) shows a compositional bias: basic and acidic residues. A compositionally biased stretch (low complexity) spans 437–453 (ADGTAARPAAPDARSGS).

Belongs to the herpesviridae DNA polymerase processivity factor family. As to quaternary structure, interacts with the DNA polymerase catalytic subunit UL30. Interacts with the origin-binding protein.

It is found in the host nucleus. Functionally, plays an essential role in viral DNA replication by acting as the polymerase accessory subunit. Associates with the viral polymerase to increase its processivity and forms high-affinity direct interactions with DNA. Facilitates the origin-binding protein UL9 loading onto DNA thus increasing its ability to assemble into a functional complex capable of unwinding duplex DNA. The protein is DNA polymerase processivity factor of Homo sapiens (Human).